The following is a 329-amino-acid chain: GTPase Obg (329 aa).

The Obg domain occupies 2 to 160 (YNFKDSVSIT…LNVRLELFLV (159 aa)). The OBG-type G domain maps to 161-327 (ADIGLVGPPN…LIKEFFILAK (167 aa)). GTP contacts are provided by residues 167–174 (GPPNAGKS), 192–196 (FTTKI), 213–216 (DIPG), 280–283 (NKLD), and 308–310 (SIY). 2 residues coordinate Mg(2+): Ser-174 and Thr-194.

Belongs to the TRAFAC class OBG-HflX-like GTPase superfamily. OBG GTPase family. In terms of assembly, monomer. Requires Mg(2+) as cofactor.

The protein resides in the cytoplasm. An essential GTPase which binds GTP, GDP and possibly (p)ppGpp with moderate affinity, with high nucleotide exchange rates and a fairly low GTP hydrolysis rate. Plays a role in control of the cell cycle, stress response, ribosome biogenesis and in those bacteria that undergo differentiation, in morphogenesis control. The chain is GTPase Obg from Borrelia garinii subsp. bavariensis (strain ATCC BAA-2496 / DSM 23469 / PBi) (Borreliella bavariensis).